Consider the following 131-residue polypeptide: Small ribosomal subunit protein uS11 (131 aa).

The protein belongs to the universal ribosomal protein uS11 family. Part of the 30S ribosomal subunit. Interacts with proteins S7 and S18. Binds to IF-3.

Located on the platform of the 30S subunit, it bridges several disparate RNA helices of the 16S rRNA. Forms part of the Shine-Dalgarno cleft in the 70S ribosome. This is Small ribosomal subunit protein uS11 from Helicobacter pylori (strain P12).